The primary structure comprises 396 residues: Elongation factor Tu (396 aa).

The tr-type G domain maps to 10–206 (KPHVNVGTIG…VLDTYIPEPE (197 aa)). The interval 19 to 26 (GHVDHGKT) is G1. Residue 19-26 (GHVDHGKT) coordinates GTP. A Mg(2+)-binding site is contributed by Thr26. Residues 60-64 (GITIN) form a G2 region. A G3 region spans residues 81–84 (DCPG). GTP contacts are provided by residues 81 to 85 (DCPGH) and 136 to 139 (NKCD). A G4 region spans residues 136–139 (NKCD). The interval 174–176 (SAT) is G5.

Belongs to the TRAFAC class translation factor GTPase superfamily. Classic translation factor GTPase family. EF-Tu/EF-1A subfamily. In terms of assembly, monomer.

It is found in the cytoplasm. It catalyses the reaction GTP + H2O = GDP + phosphate + H(+). Functionally, GTP hydrolase that promotes the GTP-dependent binding of aminoacyl-tRNA to the A-site of ribosomes during protein biosynthesis. The polypeptide is Elongation factor Tu (Psychrobacter arcticus (strain DSM 17307 / VKM B-2377 / 273-4)).